Reading from the N-terminus, the 547-residue chain is Chaperonin GroEL (547 aa).

ATP-binding positions include 30–33, Lys-51, 87–91, Gly-415, and Asp-496; these read TLGP and DGTTT.

The protein belongs to the chaperonin (HSP60) family. In terms of assembly, forms a cylinder of 14 subunits composed of two heptameric rings stacked back-to-back. Interacts with the co-chaperonin GroES.

The protein localises to the cytoplasm. It catalyses the reaction ATP + H2O + a folded polypeptide = ADP + phosphate + an unfolded polypeptide.. Together with its co-chaperonin GroES, plays an essential role in assisting protein folding. The GroEL-GroES system forms a nano-cage that allows encapsulation of the non-native substrate proteins and provides a physical environment optimized to promote and accelerate protein folding. The chain is Chaperonin GroEL from Pelodictyon phaeoclathratiforme (strain DSM 5477 / BU-1).